The chain runs to 1141 residues: Tetratricopeptide repeat protein 17 (1141 aa).

One copy of the TPR 1 repeat lies at 295–328 (FTSYYTLGNIYAMLGEYNHSVLCYDHALQARPGF). Positions 340-382 (CQQKLEQKLEAQHRSLQRTLNELKEYQKQHDHYLRQQEILEKH) form a coiled coil. TPR repeat units lie at residues 619–652 (WLIL…APLQ), 689–722 (PLTF…TTKC), 1014–1048 (SWVL…APHQ), 1051–1084 (DVPL…APHF), and 1085–1118 (AVNH…QPEF).

It belongs to the TTC17 family. Interacts with CATIP. In terms of tissue distribution, expressed in germ cells as well as in somatic cells of the testis (at protein level).

The protein resides in the cytoplasm. The protein localises to the cell membrane. Its subcellular location is the cytoskeleton. Its function is as follows. Plays a role in primary ciliogenesis by modulating actin polymerization. The chain is Tetratricopeptide repeat protein 17 (TTC17) from Homo sapiens (Human).